The following is a 397-amino-acid chain: F-box protein At4g11590 (397 aa).

The region spanning glutamate 24–phenylalanine 70 is the F-box domain.

Part of a SCF (ASK-cullin-F-box) protein ligase complex. Interacts with ASK16.

The protein resides in the nucleus. Its pathway is protein modification; protein ubiquitination. Component of SCF(ASK-cullin-F-box) E3 ubiquitin ligase complexes, which may mediate the ubiquitination and subsequent proteasomal degradation of target proteins. The protein is F-box protein At4g11590 of Arabidopsis thaliana (Mouse-ear cress).